Reading from the N-terminus, the 371-residue chain is Protein maelstrom 1 (371 aa).

Residues 2 to 68 (AQNKPNAFMA…VLERESKTER (67 aa)) constitute a DNA-binding region (HMG box).

The protein belongs to the maelstrom family.

Its subcellular location is the cytoplasm. The protein resides in the nucleus. Functionally, involved both in the piRNA and miRNA metabolic processes. As a component of the meiotic nuage, plays a central role during oogenesis by repressing transposable elements and preventing their mobilization, which is essential for the germline integrity. Repression of transposable elements is mediated via the piRNA metabolic process, which mediates the repression of transposable elements during meiosis by forming complexes composed of piRNAs and Piwi proteins and governs the repression of transposons. As a nuclear component, it is required for proper differentiation in the germline stem cell (GSC) lineage by repressing microRNA-7 (miR-7), thereby acting as an indirect regulator of bag-of-marbles (Bam). Acts by binding to the promoter of miR-7 gene and repressing its expression; miR-7 repression alleviates the Bam repression by miR-7, thereby allowing differentiation in the germline stem cell (GSC) lineage. In Drosophila pseudoobscura pseudoobscura (Fruit fly), this protein is Protein maelstrom 1 (mael1).